A 405-amino-acid polypeptide reads, in one-letter code: Zinc finger protein ubi-d4 (405 aa).

Disordered stretches follow at residues 80–147 (RKKR…GEFP), 165–194 (DDLD…GGAR), 210–230 (ACDN…VCGK), and 248–280 (AEEE…PDGL). 2 stretches are compositionally biased toward basic and acidic residues: residues 100–110 (PDTDQTLKKEG) and 126–140 (DPLE…RMDD). The span at 165-174 (DDLDDEDYEE) shows a compositional bias: acidic residues. A C2H2-type; atypical zinc finger spans residues 209–246 (YACDNSYKQKHSLKPPDRVCGKRYKNRPGLSYHYAHSH). Basic and acidic residues predominate over residues 267-277 (RSEEQKSKKGP). 2 consecutive PHD-type zinc fingers follow at residues 284–344 (NNYC…CKCC) and 341–391 (CKCC…CLDL).

It belongs to the requiem/DPF family.

It localises to the cytoplasm. Its subcellular location is the nucleus. Functionally, may be a transcription factor required for the apoptosis response following survival factor withdrawal from myeloid cells. Might also have a role in the development and maturation of lymphoid cells. This is Zinc finger protein ubi-d4 (REQ) from Gallus gallus (Chicken).